The chain runs to 63 residues: Large ribosomal subunit protein bL28 (63 aa).

This sequence belongs to the bacterial ribosomal protein bL28 family.

The protein is Large ribosomal subunit protein bL28 of Alkaliphilus oremlandii (strain OhILAs) (Clostridium oremlandii (strain OhILAs)).